A 56-amino-acid chain; its full sequence is Preprotein translocase subunit SecG (56 aa).

At 1 to 29 (MAKDKTTLPPTGAGLMRFFDEDTRAIKVS) the chain is on the cytoplasmic side. The chain crosses the membrane as a helical span at residues 30–51 (PKGVIAIVLVLIAFEVFLHLFG). The Extracellular segment spans residues 52–56 (PSIFG).

It belongs to the SEC61-beta family. Component of the protein translocase complex. Heterotrimer consisting of alpha (SecY), beta (SecG) and gamma (SecE) subunits. Can form oligomers of the heterotrimer.

The protein localises to the cell membrane. Its function is as follows. Involved in protein export. The function of the beta subunit is unknown, but it may be involved in stabilization of the trimeric complex. This Thermococcus gammatolerans (strain DSM 15229 / JCM 11827 / EJ3) protein is Preprotein translocase subunit SecG.